The sequence spans 206 residues: Small ribosomal subunit protein uS4 (206 aa).

The 61-residue stretch at Gly96 to Lys156 folds into the S4 RNA-binding domain.

The protein belongs to the universal ribosomal protein uS4 family. Part of the 30S ribosomal subunit. Contacts protein S5. The interaction surface between S4 and S5 is involved in control of translational fidelity.

Functionally, one of the primary rRNA binding proteins, it binds directly to 16S rRNA where it nucleates assembly of the body of the 30S subunit. In terms of biological role, with S5 and S12 plays an important role in translational accuracy. This is Small ribosomal subunit protein uS4 from Tolumonas auensis (strain DSM 9187 / NBRC 110442 / TA 4).